The following is a 1366-amino-acid chain: DNA-directed RNA polymerase subunit beta' (1366 aa).

The segment covering 1–20 (MTSSKPKKTSRVRKTTKNSK) has biased composition (basic residues). The disordered stretch occupies residues 1-33 (MTSSKPKKTSRVRKTTKNSKKNNPVTMPALAKT). Residues Cys-248, Cys-315, Cys-322, and Cys-325 each coordinate Zn(2+). The interval 1291 to 1366 (YTVDMPQSPA…LQEEGLLSDE (76 aa)) is disordered. Residues 1354 to 1366 (LEGLQEEGLLSDE) show a composition bias toward low complexity.

Belongs to the RNA polymerase beta' chain family. RpoC2 subfamily. In terms of assembly, in cyanobacteria the RNAP catalytic core is composed of 2 alpha, 1 beta, 1 beta', 1 gamma and 1 omega subunit. When a sigma factor is associated with the core the holoenzyme is formed, which can initiate transcription. It depends on Zn(2+) as a cofactor.

It carries out the reaction RNA(n) + a ribonucleoside 5'-triphosphate = RNA(n+1) + diphosphate. In terms of biological role, DNA-dependent RNA polymerase catalyzes the transcription of DNA into RNA using the four ribonucleoside triphosphates as substrates. The polypeptide is DNA-directed RNA polymerase subunit beta' (Prochlorococcus marinus (strain AS9601)).